The primary structure comprises 87 residues: Neurotoxin Cex4 (87 aa).

An N-terminal signal peptide occupies residues 1 to 19 (MNSLLMITACLFLIGTVWA). Residues 20 to 85 (KEGYLVNKST…TYPLPNKSCG (66 aa)) form the LCN-type CS-alpha/beta domain. Intrachain disulfides connect cysteine 31–cysteine 84, cysteine 35–cysteine 60, cysteine 44–cysteine 65, and cysteine 48–cysteine 67. Residue cysteine 84 is modified to Cysteine amide. Residues 85–87 (GRK) constitute a propeptide that is removed on maturation.

It belongs to the long (4 C-C) scorpion toxin superfamily. Sodium channel inhibitor family. Beta subfamily. In terms of tissue distribution, expressed by the venom gland.

Its subcellular location is the secreted. In terms of biological role, beta toxins bind voltage-independently at site-4 of sodium channels (Nav) and shift the voltage of activation toward more negative potentials thereby affecting sodium channel activation and promoting spontaneous and repetitive firing. This chain is Neurotoxin Cex4, found in Centruroides exilicauda (Bark scorpion).